We begin with the raw amino-acid sequence, 199 residues long: dTTP/UTP pyrophosphatase (199 aa).

Aspartate 73 acts as the Proton acceptor in catalysis.

Belongs to the Maf family. YhdE subfamily. A divalent metal cation serves as cofactor.

The protein localises to the cytoplasm. It catalyses the reaction dTTP + H2O = dTMP + diphosphate + H(+). The enzyme catalyses UTP + H2O = UMP + diphosphate + H(+). Functionally, nucleoside triphosphate pyrophosphatase that hydrolyzes dTTP and UTP. May have a dual role in cell division arrest and in preventing the incorporation of modified nucleotides into cellular nucleic acids. In Caldicellulosiruptor bescii (strain ATCC BAA-1888 / DSM 6725 / KCTC 15123 / Z-1320) (Anaerocellum thermophilum), this protein is dTTP/UTP pyrophosphatase.